A 228-amino-acid polypeptide reads, in one-letter code: Prolactin-2B1 (228 aa).

Positions 1 to 31 (MLLYLPQIFSSRASSLLFLVPYLLFWENVAS) are cleaved as a signal peptide. Cystine bridges form between Cys89–Cys194 and Cys203–Cys228. The N-linked (GlcNAc...) asparagine glycan is linked to Asn173.

Belongs to the somatotropin/prolactin family. In terms of tissue distribution, expression restricted to the placenta in trophoblast cells within the labyrinth zone.

The protein resides in the secreted. The protein is Prolactin-2B1 (Prl2b1) of Rattus norvegicus (Rat).